The chain runs to 2497 residues: Integrator complex subunit 1 homolog (2497 aa).

Over residues 1–10 (MMLNKIKRSK) the composition is skewed to basic residues. Disordered stretches follow at residues 1–151 (MMLN…NNNI), 300–337 (QPQPPQQQQTKQPVNIKTQPQQQQQQQQQPQPQQIKKS), 946–965 (QQQQQQLQTPQQQQQQQQPT), 1028–1108 (TTTT…TSSS), 1234–1292 (INNN…NQKS), and 1572–1604 (NNNNNNNNNNNNNNNNNNNNNNNNNNNNNNNIT). 5 stretches are compositionally biased toward low complexity: residues 37–46 (SDNNNNNSND), 60–151 (NNSI…NNNI), 305–333 (QQQQTKQPVNIKTQPQQQQQQQQQPQPQQ), 946–963 (QQQQQQLQTPQQQQQQQQ), and 1028–1058 (TTTTTSSTTTTTTTTTSTTTSTSTSSSSSSL). Polar residues predominate over residues 1075–1091 (SGLSGSSNGINQSSDSI). 4 stretches are compositionally biased toward low complexity: residues 1097–1108 (STSPTTTTTSSS), 1234–1265 (INNNDNNNNNNNNNNNNNNNNNNNNNDNNINK), 1272–1289 (HSNSMANNNLPNNNNKNN), and 1572–1602 (NNNNNNNNNNNNNNNNNNNNNNNNNNNNNNN). Residues 1645–1675 (RILKNTTQQKQQKQQQKESVQKSIQSLSKLI) adopt a coiled-coil conformation. Over residues 2084 to 2115 (QQQQQQQQQQQQQQKQQSNNSNNINNNNNNNN) the composition is skewed to low complexity. 2 disordered regions span residues 2084–2123 (QQQQQQQQQQQQQQKQQSNNSNNINNNNNNNNSEKKQKSK) and 2329–2350 (NNNNNNNNNNNNNNNNNNNNNN).

Belongs to the Integrator subunit 1 family. Component of the Integrator complex. The core complex associates with protein phosphatase 2A subunits to form the Integrator-PP2A (INTAC) complex.

Its subcellular location is the nucleus. Its function is as follows. Component of the integrator complex, a multiprotein complex that terminates RNA polymerase II (Pol II) transcription in the promoter-proximal region of genes. The integrator complex provides a quality checkpoint during transcription elongation by driving premature transcription termination of transcripts that are unfavorably configured for transcriptional elongation: the complex terminates transcription by (1) catalyzing dephosphorylation of the C-terminal domain (CTD) of Pol II subunit polr2a, (2) degrading the exiting nascent RNA transcript via endonuclease activity and (3) promoting the release of Pol II from bound DNA. The integrator complex is also involved in terminating the synthesis of non-coding Pol II transcripts, such as enhancer RNAs (eRNAs), small nuclear RNAs (snRNAs), telomerase RNAs and long non-coding RNAs (lncRNAs). This is Integrator complex subunit 1 homolog (ints1) from Dictyostelium discoideum (Social amoeba).